A 181-amino-acid chain; its full sequence is Protein GrpE (181 aa).

Residues 1–21 (MNKEQQDLQTEQEAAVETAEL) are disordered. Positions 8–21 (LQTEQEAAVETAEL) are enriched in low complexity.

Belongs to the GrpE family. In terms of assembly, homodimer.

The protein localises to the cytoplasm. Functionally, participates actively in the response to hyperosmotic and heat shock by preventing the aggregation of stress-denatured proteins, in association with DnaK and GrpE. It is the nucleotide exchange factor for DnaK and may function as a thermosensor. Unfolded proteins bind initially to DnaJ; upon interaction with the DnaJ-bound protein, DnaK hydrolyzes its bound ATP, resulting in the formation of a stable complex. GrpE releases ADP from DnaK; ATP binding to DnaK triggers the release of the substrate protein, thus completing the reaction cycle. Several rounds of ATP-dependent interactions between DnaJ, DnaK and GrpE are required for fully efficient folding. This is Protein GrpE from Trichlorobacter lovleyi (strain ATCC BAA-1151 / DSM 17278 / SZ) (Geobacter lovleyi).